The chain runs to 621 residues: Pentatricopeptide repeat-containing protein At3g48250, chloroplastic (621 aa).

The transit peptide at 1 to 67 (MYRSMAILSS…SKPDSMLQLV (67 aa)) directs the protein to the chloroplast. 10 PPR repeats span residues 122 to 156 (STPL…GFYL), 157 to 194 (DEDT…NAMS), 262 to 296 (STVT…GYDM), 297 to 331 (DLDT…PFKP), 332 to 368 (SIQD…GKSL), 369 to 403 (SKAV…GYEP), 404 to 438 (DNIT…GCFP), 439 to 473 (DIKT…GFDI), 474 to 509 (DSNL…NVKP), and 510 to 544 (WQST…NYPA).

It belongs to the PPR family. P subfamily.

The protein resides in the plastid. It localises to the chloroplast. The sequence is that of Pentatricopeptide repeat-containing protein At3g48250, chloroplastic from Arabidopsis thaliana (Mouse-ear cress).